A 525-amino-acid chain; its full sequence is Putative ribose/galactose/methyl galactoside import ATP-binding protein (525 aa).

The segment at 1–20 is disordered; the sequence is MSGSATASPPAKPDLPSSDG. ABC transporter domains follow at residues 33–269 and 279–523; these read LEIS…VGRE and KPAG…SGHR. ATP is bound at residue 65-72; it reads GENGAGKS.

This sequence belongs to the ABC transporter superfamily. Carbohydrate importer 2 (CUT2) (TC 3.A.1.2) family.

It is found in the cell inner membrane. It carries out the reaction D-ribose(out) + ATP + H2O = D-ribose(in) + ADP + phosphate + H(+). The catalysed reaction is D-galactose(out) + ATP + H2O = D-galactose(in) + ADP + phosphate + H(+). Part of an ABC transporter complex involved in carbohydrate import. Could be involved in ribose, galactose and/or methyl galactoside import. Responsible for energy coupling to the transport system. In Pseudomonas syringae pv. tomato (strain ATCC BAA-871 / DC3000), this protein is Putative ribose/galactose/methyl galactoside import ATP-binding protein.